The chain runs to 20 residues: Acidic phospholipase A2 CbIbeta (20 aa).

It belongs to the phospholipase A2 family. Group II subfamily. D49 sub-subfamily. As to quaternary structure, heterodimer of an acidic subunit (CbIalpha or CbIbeta) and a basic subunit (CbII). The acidic subunit (CbI) is non-toxic, and increases the toxicity of the basic subunit (CbII). The cofactor is Ca(2+). Contains 7 disulfide bonds. In terms of tissue distribution, expressed by the venom gland.

Its subcellular location is the secreted. It carries out the reaction a 1,2-diacyl-sn-glycero-3-phosphocholine + H2O = a 1-acyl-sn-glycero-3-phosphocholine + a fatty acid + H(+). Its function is as follows. Heterodimer: presynaptic neurotoxin. In terms of biological role, monomer: Snake venom phospholipase A2 (PLA2) is inactive towards micellar phosphatidylcholine but is weakly active towards non-micellar dithiolecithin. PLA2 catalyzes the calcium-dependent hydrolysis of the 2-acyl groups in 3-sn-phosphoglycerides. In Pseudocerastes fieldi (Field's horned viper), this protein is Acidic phospholipase A2 CbIbeta.